Consider the following 247-residue polypeptide: Dof zinc finger protein DOF3.5 (247 aa).

A Dof-type zinc finger spans residues 25–79 (PSCPRCGSSNTKFCYYNNYSLTQPRYFCKGCRRYWTKGGSLRNVPVGGGCRKSRR). Positions 27, 30, 52, and 55 each coordinate Zn(2+). Residues 70 to 100 (VGGGCRKSRRPKSSSGNNTKTSLTANSGNPG) are disordered. Residues 82-94 (SSSGNNTKTSLTA) are compositionally biased toward polar residues.

Its subcellular location is the nucleus. Its function is as follows. Transcription factor that binds specifically to a 5'-AA[AG]G-3' consensus core sequence. This Arabidopsis thaliana (Mouse-ear cress) protein is Dof zinc finger protein DOF3.5 (DOF3.5).